Here is a 408-residue protein sequence, read N- to C-terminus: Imidazolonepropionase (408 aa).

Fe(3+) contacts are provided by histidine 73 and histidine 75. Zn(2+)-binding residues include histidine 73 and histidine 75. Residues arginine 82, tyrosine 145, and histidine 178 each contribute to the 4-imidazolone-5-propanoate site. Tyrosine 145 serves as a coordination point for N-formimidoyl-L-glutamate. A Fe(3+)-binding site is contributed by histidine 243. Residue histidine 243 participates in Zn(2+) binding. Glutamine 246 provides a ligand contact to 4-imidazolone-5-propanoate. Aspartate 318 provides a ligand contact to Fe(3+). Aspartate 318 is a Zn(2+) binding site. N-formimidoyl-L-glutamate-binding residues include asparagine 320 and glycine 322. Serine 323 serves as a coordination point for 4-imidazolone-5-propanoate.

Belongs to the metallo-dependent hydrolases superfamily. HutI family. Zn(2+) serves as cofactor. Requires Fe(3+) as cofactor.

It localises to the cytoplasm. The enzyme catalyses 4-imidazolone-5-propanoate + H2O = N-formimidoyl-L-glutamate. The protein operates within amino-acid degradation; L-histidine degradation into L-glutamate; N-formimidoyl-L-glutamate from L-histidine: step 3/3. Its function is as follows. Catalyzes the hydrolytic cleavage of the carbon-nitrogen bond in imidazolone-5-propanoate to yield N-formimidoyl-L-glutamate. It is the third step in the universal histidine degradation pathway. The chain is Imidazolonepropionase from Shewanella putrefaciens (strain CN-32 / ATCC BAA-453).